The primary structure comprises 207 residues: Ribonuclease HII (207 aa).

Positions 12 to 205 constitute an RNase H type-2 domain; that stretch reads GLVVGIDEVG…IRNMIEAEAH (194 aa). A divalent metal cation contacts are provided by D18, E19, and D114.

Belongs to the RNase HII family. Mn(2+) serves as cofactor. Mg(2+) is required as a cofactor.

It is found in the cytoplasm. It carries out the reaction Endonucleolytic cleavage to 5'-phosphomonoester.. In terms of biological role, endonuclease that specifically degrades the RNA of RNA-DNA hybrids. This Gluconobacter oxydans (strain 621H) (Gluconobacter suboxydans) protein is Ribonuclease HII.